The following is a 356-amino-acid chain: tRNA pseudouridine synthase D (356 aa).

The Nucleophile role is filled by aspartate 84. Residues 159–302 form the TRUD domain; that stretch reads GVPNYYGPQR…RRGARRPIRV (144 aa).

The protein belongs to the pseudouridine synthase TruD family.

The catalysed reaction is uridine(13) in tRNA = pseudouridine(13) in tRNA. In terms of biological role, responsible for synthesis of pseudouridine from uracil-13 in transfer RNAs. This chain is tRNA pseudouridine synthase D, found in Thermus thermophilus (strain ATCC BAA-163 / DSM 7039 / HB27).